A 340-amino-acid polypeptide reads, in one-letter code: Holliday junction branch migration complex subunit RuvB (340 aa).

The tract at residues 1-183 is large ATPase domain (RuvB-L); the sequence is MKRDDLVSPE…FGISFRLDYY (183 aa). ATP contacts are provided by residues Leu-22, Arg-23, Gly-64, Lys-67, Thr-68, Thr-69, 130–132, Arg-173, Tyr-183, and Arg-220; that span reads EDF. Thr-68 contacts Mg(2+). The tract at residues 184–254 is small ATPAse domain (RuvB-S); the sequence is AVEELTKIIN…VAVHALEMLE (71 aa). Positions 257–340 are head domain (RuvB-H); the sequence is DRGFDQMDRS…KFEVGQKELF (84 aa). Positions 312 and 317 each coordinate DNA.

It belongs to the RuvB family. Homohexamer. Forms an RuvA(8)-RuvB(12)-Holliday junction (HJ) complex. HJ DNA is sandwiched between 2 RuvA tetramers; dsDNA enters through RuvA and exits via RuvB. An RuvB hexamer assembles on each DNA strand where it exits the tetramer. Each RuvB hexamer is contacted by two RuvA subunits (via domain III) on 2 adjacent RuvB subunits; this complex drives branch migration. In the full resolvosome a probable DNA-RuvA(4)-RuvB(12)-RuvC(2) complex forms which resolves the HJ.

The protein resides in the cytoplasm. It carries out the reaction ATP + H2O = ADP + phosphate + H(+). In terms of biological role, the RuvA-RuvB-RuvC complex processes Holliday junction (HJ) DNA during genetic recombination and DNA repair, while the RuvA-RuvB complex plays an important role in the rescue of blocked DNA replication forks via replication fork reversal (RFR). RuvA specifically binds to HJ cruciform DNA, conferring on it an open structure. The RuvB hexamer acts as an ATP-dependent pump, pulling dsDNA into and through the RuvAB complex. RuvB forms 2 homohexamers on either side of HJ DNA bound by 1 or 2 RuvA tetramers; 4 subunits per hexamer contact DNA at a time. Coordinated motions by a converter formed by DNA-disengaged RuvB subunits stimulates ATP hydrolysis and nucleotide exchange. Immobilization of the converter enables RuvB to convert the ATP-contained energy into a lever motion, pulling 2 nucleotides of DNA out of the RuvA tetramer per ATP hydrolyzed, thus driving DNA branch migration. The RuvB motors rotate together with the DNA substrate, which together with the progressing nucleotide cycle form the mechanistic basis for DNA recombination by continuous HJ branch migration. Branch migration allows RuvC to scan DNA until it finds its consensus sequence, where it cleaves and resolves cruciform DNA. The protein is Holliday junction branch migration complex subunit RuvB of Syntrophus aciditrophicus (strain SB).